The primary structure comprises 436 residues: GTPase Der (436 aa).

EngA-type G domains follow at residues 4-167 (PVVA…PEVE) and 174-350 (VRVA…EQRT). GTP is bound by residues 10-17 (GRPNVGKS), 57-61 (DTGGL), 120-123 (NKVD), 180-187 (GRPNVGKS), 227-231 (DTAGL), and 292-295 (NKWD). The 85-residue stretch at 351 to 435 (RRISTSEVND…PLRIILRRKN (85 aa)) folds into the KH-like domain.

Belongs to the TRAFAC class TrmE-Era-EngA-EngB-Septin-like GTPase superfamily. EngA (Der) GTPase family. As to quaternary structure, associates with the 50S ribosomal subunit.

Its function is as follows. GTPase that plays an essential role in the late steps of ribosome biogenesis. The sequence is that of GTPase Der from Gemmatimonas aurantiaca (strain DSM 14586 / JCM 11422 / NBRC 100505 / T-27).